Here is an 80-residue protein sequence, read N- to C-terminus: Large ribosomal subunit protein bL31B (80 aa).

The protein belongs to the bacterial ribosomal protein bL31 family. Type B subfamily. As to quaternary structure, part of the 50S ribosomal subunit.

In Streptococcus mutans serotype c (strain ATCC 700610 / UA159), this protein is Large ribosomal subunit protein bL31B.